Here is a 172-residue protein sequence, read N- to C-terminus: Adenine phosphoribosyltransferase (172 aa).

This sequence belongs to the purine/pyrimidine phosphoribosyltransferase family. As to quaternary structure, homodimer.

The protein localises to the cytoplasm. The enzyme catalyses AMP + diphosphate = 5-phospho-alpha-D-ribose 1-diphosphate + adenine. Its pathway is purine metabolism; AMP biosynthesis via salvage pathway; AMP from adenine: step 1/1. Its function is as follows. Catalyzes a salvage reaction resulting in the formation of AMP, that is energically less costly than de novo synthesis. This Roseiflexus sp. (strain RS-1) protein is Adenine phosphoribosyltransferase.